The sequence spans 645 residues: MSTVNKKPASLKYKIGKVKQIPTVVKDDKTGLEYIQVQSRENEKVYGVTKFLNNYREEEKLGQGTFGEVFKGIHLGTNRKVAIKRILVRAEKDLFPITAQREITILKRMNHKNIVKLIEIVYDESPTPKTDSTSPRPVGNYHGNNTANQQKLITGKHFFMILPYMVSDLTGLLHNPRVEFGMADVKNIMLQLLEGINYIHCNKFLHRDIKTANILIDHKGVVKIADFGLARNYYGSPPNLKYPGGAGSGAKYTSVVVTRWYRAPEIVLGDRHYTTAVDIWGIGCVFAEFFEKKPILQGQTDIDQGHVIFKLMGTPSMDEWGLAYHLPGSELTKTNYKSTLQERFSKALNETGLDLLSKLLALDPYKRVTAMKAKKHPFFFEEPLPNAQLTLPNEECHESDIKRYKSEMNESMSQRPPSAPTGHTSTDNSIRAVTGAAFPKEASIPKAPRPEHIKSTIPAQPSASRYNGAATQNIPKEPIPTAPLPKGPKNSIPTGPNKLPPNPRDSYASKYPAESRFGVNTRITTESYNAGKRYRNRGGWETGRDSLNYNNNYAPPADRSHHPTIQRPSAPRGGSYPNRYQNQDYNTSRNTGYNQYSQAGDRRSYRPGASENPGTIGHGSSQSTQKDSKSSHSNNVKPKDVADYY.

One can recognise a Protein kinase domain in the interval 55-379 (YREEEKLGQG…AMKAKKHPFF (325 aa)). ATP contacts are provided by residues 61-69 (LGQGTFGEV) and Lys84. Catalysis depends on Asp208, which acts as the Proton acceptor. 3 disordered regions span residues 407–428 (EMNE…STDN), 442–513 (ASIP…KYPA), and 533–645 (RYRN…ADYY). Composition is skewed to polar residues over residues 409 to 428 (NESM…STDN) and 457 to 474 (IPAQ…TQNI). Pro residues predominate over residues 477–486 (EPIPTAPLPK). Residues 578-598 (NRYQNQDYNTSRNTGYNQYSQ) show a composition bias toward polar residues.

It belongs to the protein kinase superfamily. CMGC Ser/Thr protein kinase family. CDC2/CDKX subfamily.

It localises to the nucleus. The enzyme catalyses L-seryl-[protein] + ATP = O-phospho-L-seryl-[protein] + ADP + H(+). It carries out the reaction L-threonyl-[protein] + ATP = O-phospho-L-threonyl-[protein] + ADP + H(+). It catalyses the reaction [DNA-directed RNA polymerase] + ATP = phospho-[DNA-directed RNA polymerase] + ADP + H(+). In terms of biological role, serine/threonine-protein kinase involved in transcription regulation. Phosphorylates the UBC2/RAD6 ubiquitin-conjugating enzyme (E2), leading to monoubiquitination of histone H2B and the silencing of telomeric-associated genes. Also required for histone H3 methylation. Necessary for the recovery from pheromone-induced growth arrest in the cell cycle G1 phase. This chain is Serine/threonine-protein kinase BUR1 (BUR1), found in Kluyveromyces lactis (strain ATCC 8585 / CBS 2359 / DSM 70799 / NBRC 1267 / NRRL Y-1140 / WM37) (Yeast).